A 169-amino-acid polypeptide reads, in one-letter code: Small ribosomal subunit protein uS5c (169 aa).

One can recognise an S5 DRBM domain in the interval 17–80; it reads WQERVIQVRR…TDGRKNLINI (64 aa).

Belongs to the universal ribosomal protein uS5 family. In terms of assembly, part of the 30S ribosomal subunit. Contacts protein S4.

It is found in the plastid. It localises to the chloroplast. With S4 and S12 plays an important role in translational accuracy. This chain is Small ribosomal subunit protein uS5c (rps5), found in Guillardia theta (Cryptophyte).